We begin with the raw amino-acid sequence, 186 residues long: ATP synthase subunit delta (186 aa).

This sequence belongs to the ATPase delta chain family. As to quaternary structure, F-type ATPases have 2 components, F(1) - the catalytic core - and F(0) - the membrane proton channel. F(1) has five subunits: alpha(3), beta(3), gamma(1), delta(1), epsilon(1). CF(0) has four main subunits: a(1), b(1), b'(1) and c(10-14). The alpha and beta chains form an alternating ring which encloses part of the gamma chain. F(1) is attached to F(0) by a central stalk formed by the gamma and epsilon chains, while a peripheral stalk is formed by the delta, b and b' chains.

The protein localises to the cell inner membrane. F(1)F(0) ATP synthase produces ATP from ADP in the presence of a proton or sodium gradient. F-type ATPases consist of two structural domains, F(1) containing the extramembraneous catalytic core and F(0) containing the membrane proton channel, linked together by a central stalk and a peripheral stalk. During catalysis, ATP synthesis in the catalytic domain of F(1) is coupled via a rotary mechanism of the central stalk subunits to proton translocation. Its function is as follows. This protein is part of the stalk that links CF(0) to CF(1). It either transmits conformational changes from CF(0) to CF(1) or is implicated in proton conduction. This is ATP synthase subunit delta from Rhodospirillum rubrum (strain ATCC 11170 / ATH 1.1.1 / DSM 467 / LMG 4362 / NCIMB 8255 / S1).